The chain runs to 722 residues: D-galactosyl-beta-1-&gt;4-L-rhamnose phosphorylase (722 aa).

The active-site Proton donor is the aspartate 319.

Belongs to the glycoside hydrolase 112 family.

It carries out the reaction beta-D-galactosyl-(1-&gt;4)-L-rhamnose + phosphate = alpha-D-galactose 1-phosphate + L-rhamnopyranose. Reversibly phosphorolyzes beta-D-galactosyl-(1-&gt;4)-L-rhamnose to form alpha-D-galactose 1-phosphate and L-rhamnose. Does not phosphorolyze galacto-N-biose or lacto-N-biose. In the reverse reaction, has the highest activity toward L-rhamnose, also has activity toward L-mannose, and low activity toward L-lyxose, D-glucose, 2-deoxy-D-glucose and D-galactose. This chain is D-galactosyl-beta-1-&gt;4-L-rhamnose phosphorylase, found in Lachnoclostridium phytofermentans (strain ATCC 700394 / DSM 18823 / ISDg) (Clostridium phytofermentans).